An 803-amino-acid polypeptide reads, in one-letter code: Bromodomain-containing protein 2 (803 aa).

At Met1 the chain carries N-acetylmethionine. The interval 1 to 28 is disordered; it reads MLQNVTPHSKLPGEGNAGLLGLGPEAAA. Phosphothreonine is present on Thr6. The residue at position 37 (Ser37) is a Phosphoserine. The segment at 53–73 is disordered; sequence ALQLTPANPPPPEVSNPKKPG. Residues 74 to 180 form the Bromo 1 domain; the sequence is RVTNQLQYLH…KIFLQKVASM (107 aa). Residues Asp112, Tyr155, Asn156, Lys157, Asp160, and Asp161 each contribute to the a protein site. 3 disordered regions span residues 268 to 349, 456 to 653, and 739 to 803; these read PPAQ…LSEQ, EPLE…RQLS, and EKRL…SDSG. The span at 285 to 298 shows a compositional bias: low complexity; it reads TTTPTPTAILAPGS. Phosphoserine occurs at positions 298, 301, and 305. The span at 316-332 shows a compositional bias: basic and acidic residues; the sequence is MRRESGRPIKPPRKDLP. A Bromo 2 domain is found at 344 to 453; the sequence is GKLSEQLKHC…DVFEFRYAKM (110 aa). Residues 481 to 515 are compositionally biased toward acidic residues; that stretch reads SSEESSSESSSEEDEEEDEEEEEEEEESESSDSEE. The segment covering 545–567 has biased composition (basic residues); it reads KPKRKREKKEKKKKRKAEKHRGR. The short motif at 556–560 is the Nuclear localization signal element; the sequence is KKKRK. The NET domain maps to 634–716; that stretch reads DSEEEEESRP…SCLRKKPRKP (83 aa). The residue at position 635 (Ser635) is a Phosphoserine. Residues 641–652 show a composition bias toward basic and acidic residues; it reads SRPMSYDEKRQL. Residues 777-797 are compositionally biased toward low complexity; the sequence is SASSSSSDSSSSSSSSSSSDT.

Belongs to the BET family. As to quaternary structure, homodimer. Interacts with E2F1. Interacts with (acetylated) STAT3; promoting STAT3 recruitment to chromatin. Interacts with CTCF; promoting BRD2 recruitment to chromatin.

It is found in the nucleus. The protein resides in the chromosome. Chromatin reader protein that specifically recognizes and binds histone H4 acetylated at 'Lys-5' and 'Lys-12' (H4K5ac and H4K12ac, respectively), thereby controlling gene expression and remodeling chromatin structures. Recruits transcription factors and coactivators to target gene sites, and activates RNA polymerase II machinery for transcriptional elongation. Plays a key role in genome compartmentalization via its association with CTCF and cohesin: recruited to chromatin by CTCF and promotes formation of topologically associating domains (TADs) via its ability to bind acetylated histones, contributing to CTCF boundary formation and enhancer insulation. Also recognizes and binds acetylated non-histone proteins, such as STAT3. Involved in inflammatory response by regulating differentiation of naive CD4(+) T-cells into T-helper Th17: recognizes and binds STAT3 acetylated at 'Lys-87', promoting STAT3 recruitment to chromatin. In addition to acetylated lysines, also recognizes and binds lysine residues on histones that are both methylated and acetylated on the same side chain to form N6-acetyl-N6-methyllysine (Kacme), an epigenetic mark of active chromatin associated with increased transcriptional initiation. Specifically binds histone H4 acetyl-methylated at 'Lys-5' and 'Lys-12' (H4K5acme and H4K12acme, respectively). In Canis lupus familiaris (Dog), this protein is Bromodomain-containing protein 2 (BRD2).